We begin with the raw amino-acid sequence, 785 residues long: Uncoating factor OPG117 (785 aa).

Asp-170 is an active-site residue. A primase region spans residues 342–469; the sequence is TERGDHIVWI…ELINIINDIQ (128 aa). An SF3 helicase domain is found at 477-639; that stretch reads KNRELYEKTL…FSQPSGREAA (163 aa). 503-510 is a binding site for ATP; sequence GETATGKS.

This sequence belongs to the orthopoxvirus OPG117 family. In terms of assembly, homomultimer; hexamer. Interacts with OPG148.

The protein localises to the host cytoplasm. Multifunctional protein required for genome uncoating and replication. Major viral uncoating protein that is required for the release of the viral genome from incoming viral cores containing the viral DNA genome. Possesses an ATPase activity that is required for hexamerization and uncoating. In Variola virus (isolate Human/India/Ind3/1967) (VARV), this protein is Uncoating factor OPG117 (OPG117).